The primary structure comprises 862 residues: DNA mismatch repair protein MutS (862 aa).

Gly-621 to Ser-628 provides a ligand contact to ATP.

Belongs to the DNA mismatch repair MutS family.

In terms of biological role, this protein is involved in the repair of mismatches in DNA. It is possible that it carries out the mismatch recognition step. This protein has a weak ATPase activity. This chain is DNA mismatch repair protein MutS, found in Vibrio cholerae serotype O1 (strain ATCC 39541 / Classical Ogawa 395 / O395).